Consider the following 1261-residue polypeptide: Myosin-1 (1261 aa).

Residues 1-39 (MGHSRRPVGGEKKSRGFGRSKVADVGDGRQAGKPQVKKA) are disordered. A Myosin motor domain is found at 49–728 (IGVSDLTLLS…TLFALEAMRD (680 aa)). 142–149 (GESGAGKT) lines the ATP pocket. Ser370 is modified (phosphoserine). The interval 417–499 (SIGILDIYGF…PGVFAALNDA (83 aa)) is actin-binding. IQ domains lie at 732–752 (HNMA…RIEC) and 753–778 (AIRI…QGHQ). Residues 786-973 (RRRMSLLGSR…KSHTIHTSPG (188 aa)) form the TH1 domain. Disordered regions lie at residues 956–1093 (ASPN…KALY) and 1139–1261 (YLEE…DDEW). 4 stretches are compositionally biased toward pro residues: residues 1019-1029 (RPTPKPQPLPQ), 1038-1052 (IPAP…PVPQ), 1072-1084 (APPP…PPAP), and 1147-1159 (TPKP…PPAA). An SH3 domain is found at 1084–1145 (PKKATAKALY…PQAYLEEQVA (62 aa)). Residues 1160–1181 (PRASPVPSANGAAATAAAAKAK) are compositionally biased toward low complexity. Polar residues predominate over residues 1212 to 1233 (VSMNSQDSSGGSGRGTPNSTSN). Residues 1234 to 1243 (ASLAGGLAEA) are compositionally biased toward low complexity.

This sequence belongs to the TRAFAC class myosin-kinesin ATPase superfamily. Myosin family. Post-translationally, phosphorylation of the TEDS site (Ser-370) is required for the polarization of the actin cytoskeleton. Phosphorylation probably activates the myosin-I ATPase activity.

It localises to the cytoplasm. The protein resides in the cytoskeleton. It is found in the actin patch. Its function is as follows. Type-I myosin implicated in the organization of the actin cytoskeleton. Required for proper actin cytoskeleton polarization. At the cell cortex, assembles in patch-like structures together with proteins from the actin-polymerizing machinery and promotes actin assembly. Functions as actin nucleation-promoting factor (NPF) for the Arp2/3 complex. Plays an important role in polarized growth, spore germination, hyphal morphogenesis, and septal wall formation. This Aspergillus oryzae (strain ATCC 42149 / RIB 40) (Yellow koji mold) protein is Myosin-1 (myoA).